A 90-amino-acid chain; its full sequence is Small ribosomal subunit protein bS16 (90 aa).

Belongs to the bacterial ribosomal protein bS16 family.

The polypeptide is Small ribosomal subunit protein bS16 (Bacillus velezensis (strain DSM 23117 / BGSC 10A6 / LMG 26770 / FZB42) (Bacillus amyloliquefaciens subsp. plantarum)).